A 469-amino-acid chain; its full sequence is Aspartyl/glutamyl-tRNA(Asn/Gln) amidotransferase subunit B (469 aa).

This sequence belongs to the GatB/GatE family. GatB subfamily. As to quaternary structure, heterotrimer of A, B and C subunits.

It carries out the reaction L-glutamyl-tRNA(Gln) + L-glutamine + ATP + H2O = L-glutaminyl-tRNA(Gln) + L-glutamate + ADP + phosphate + H(+). The catalysed reaction is L-aspartyl-tRNA(Asn) + L-glutamine + ATP + H2O = L-asparaginyl-tRNA(Asn) + L-glutamate + ADP + phosphate + 2 H(+). In terms of biological role, allows the formation of correctly charged Asn-tRNA(Asn) or Gln-tRNA(Gln) through the transamidation of misacylated Asp-tRNA(Asn) or Glu-tRNA(Gln) in organisms which lack either or both of asparaginyl-tRNA or glutaminyl-tRNA synthetases. The reaction takes place in the presence of glutamine and ATP through an activated phospho-Asp-tRNA(Asn) or phospho-Glu-tRNA(Gln). The sequence is that of Aspartyl/glutamyl-tRNA(Asn/Gln) amidotransferase subunit B from Methanococcus maripaludis (strain DSM 14266 / JCM 13030 / NBRC 101832 / S2 / LL).